We begin with the raw amino-acid sequence, 466 residues long: Methylenomycin A resistance protein (466 aa).

A run of 14 helical transmembrane segments spans residues 16–36 (ISVL…VTVV), 56–76 (WVVD…GALA), 83–103 (TIYI…AASI), 113–133 (LIQG…LAAS), 146–166 (LWAA…GVLV), 168–188 (LAGW…ALIS), 203–223 (VNII…YALI), 234–254 (VILV…LREI), 276–296 (FIGF…SLFL), 305–325 (FMAG…NLLF), 337–357 (LMFV…VLIS), 367–387 (VLMS…TTVI), 409–429 (IGAL…ATWY), and 434–454 (FAFL…WLFL).

It belongs to the major facilitator superfamily. EmrB family.

It is found in the cell membrane. In terms of biological role, resistance to the epoxide antibiotic methylenomycin. This is Methylenomycin A resistance protein (mmr) from Bacillus subtilis (strain 168).